A 449-amino-acid chain; its full sequence is Phosphoglucosamine mutase (449 aa).

Serine 101 functions as the Phosphoserine intermediate in the catalytic mechanism. Residues serine 101, aspartate 243, aspartate 245, and aspartate 247 each coordinate Mg(2+). Phosphoserine is present on serine 101.

Belongs to the phosphohexose mutase family. It depends on Mg(2+) as a cofactor. In terms of processing, activated by phosphorylation.

It catalyses the reaction alpha-D-glucosamine 1-phosphate = D-glucosamine 6-phosphate. Catalyzes the conversion of glucosamine-6-phosphate to glucosamine-1-phosphate. This is Phosphoglucosamine mutase from Syntrophus aciditrophicus (strain SB).